Consider the following 428-residue polypeptide: UPF0761 membrane protein Ppha_1623 (428 aa).

The next 6 membrane-spanning stretches (helical) occupy residues 52–72, 108–128, 148–168, 189–209, 216–233, and 252–272; these read LLSIVPILAVILSILNVFVVF, SVPILGGVFLFIIALFLISTV, FTLYWTVLTLGPVLIGSSLAA, LLSFFPFINSVAAFFLLYMLV, FVHAFSGALLAALLFELS, and GALSVIPMLFFWVYLGWIVVL.

Belongs to the UPF0761 family.

The protein resides in the cell inner membrane. The sequence is that of UPF0761 membrane protein Ppha_1623 from Pelodictyon phaeoclathratiforme (strain DSM 5477 / BU-1).